Here is a 358-residue protein sequence, read N- to C-terminus: Transcription factor bHLH67 (358 aa).

The segment at 125–176 (NMTLPSSTSSPLSAHSRRKRKINHLLPQEMTREKRKRRKTKPSKNNEEIENQ) is disordered. Residues 127-137 (TLPSSTSSPLS) show a composition bias toward low complexity. Positions 157–166 (EKRKRRKTKP) are enriched in basic residues. In terms of domain architecture, bHLH spans 175–226 (NQRINHIAVERNRRRQMNEHINSLRALLPPSYIQRGDQASIVGGAINYVKVL).

Homodimer. Expressed constitutively in roots, leaves, stems, and flowers.

Its subcellular location is the nucleus. This Arabidopsis thaliana (Mouse-ear cress) protein is Transcription factor bHLH67 (BHLH67).